The following is a 511-amino-acid chain: Protein HESO1 (511 aa).

Positions 378 to 511 are disordered; that stretch reads ARPQNQQMQQ…GQIWRPRHEQ (134 aa). The span at 381 to 392 shows a compositional bias: low complexity; it reads QNQQMQQNWSQS. Positions 404 to 465 are enriched in polar residues; the sequence is LTQSRPQQNW…TSAGSSQNQG (62 aa).

Belongs to the DNA polymerase type-B-like family.

The protein resides in the cytoplasm. It is found in the P-body. It localises to the nucleus. The enzyme catalyses RNA(n) + UTP = RNA(n)-3'-uridine ribonucleotide + diphosphate. Its activity is regulated as follows. Completely inhibited by 2'-O-methylation on the substrate RNA. Uridylates small RNAs to trigger their degradation. Catalyzes the uridylation of 5' fragments produced by AGO1-mediated cleavage of miRNA target RNAs. Acts synergistically with URT1 in unmethylated miRNA uridylation, leading to their degradation. URT1 and HESO1 prefer substrates with different 3' end nucleotides and act cooperatively to tail different forms of the same miRNAs. URT1 and HESO1 act sequentially, with URT1 mono-uridylating the miRNAs followed by their further uridylation by HESO1. URT1 and HESO1 are involved in the uridylation and clearance of RISC-generated 5' mRNA fragments. Able to act on AGO1-bound miRNAs and the uridylated species stay associated with AGO1. This chain is Protein HESO1, found in Arabidopsis thaliana (Mouse-ear cress).